The sequence spans 381 residues: tRNA pseudouridine synthase D (381 aa).

Aspartate 81 functions as the Nucleophile in the catalytic mechanism. Positions 160–335 (GMPNYFGSQR…TLGSRRFFWV (176 aa)) constitute a TRUD domain.

This sequence belongs to the pseudouridine synthase TruD family.

It carries out the reaction uridine(13) in tRNA = pseudouridine(13) in tRNA. Functionally, responsible for synthesis of pseudouridine from uracil-13 in transfer RNAs. This Helicobacter pylori (strain G27) protein is tRNA pseudouridine synthase D.